A 276-amino-acid chain; its full sequence is Formamidopyrimidine-DNA glycosylase (276 aa).

The active-site Schiff-base intermediate with DNA is the proline 2. Residue glutamate 3 is the Proton donor of the active site. Lysine 60 acts as the Proton donor; for beta-elimination activity in catalysis. The DNA site is built by histidine 93 and arginine 112. An FPG-type zinc finger spans residues 240–274; the sequence is NVYGKKGEPCVTCGTILEKTVVGGRGTHYCPICQP. Arginine 264 serves as the catalytic Proton donor; for delta-elimination activity.

This sequence belongs to the FPG family. Monomer. Zn(2+) serves as cofactor.

It catalyses the reaction Hydrolysis of DNA containing ring-opened 7-methylguanine residues, releasing 2,6-diamino-4-hydroxy-5-(N-methyl)formamidopyrimidine.. The catalysed reaction is 2'-deoxyribonucleotide-(2'-deoxyribose 5'-phosphate)-2'-deoxyribonucleotide-DNA = a 3'-end 2'-deoxyribonucleotide-(2,3-dehydro-2,3-deoxyribose 5'-phosphate)-DNA + a 5'-end 5'-phospho-2'-deoxyribonucleoside-DNA + H(+). Involved in base excision repair of DNA damaged by oxidation or by mutagenic agents. Acts as a DNA glycosylase that recognizes and removes damaged bases. Has a preference for oxidized purines, such as 7,8-dihydro-8-oxoguanine (8-oxoG). Has AP (apurinic/apyrimidinic) lyase activity and introduces nicks in the DNA strand. Cleaves the DNA backbone by beta-delta elimination to generate a single-strand break at the site of the removed base with both 3'- and 5'-phosphates. The chain is Formamidopyrimidine-DNA glycosylase from Bacillus cereus (strain ATCC 14579 / DSM 31 / CCUG 7414 / JCM 2152 / NBRC 15305 / NCIMB 9373 / NCTC 2599 / NRRL B-3711).